The chain runs to 200 residues: MASKIEILKANLEAALGARVVSLTEAIGELTLVVKASDYLEVAKTLRDDPKLRFEQLIDLCGVDYQTYGDGAYDGPRFAAVSQLLSVTNNWRLRLRVFAPDDDLPIVASLVDIWTSANWYEREAFDLYGLVFEGHPDLRRILTDYGFIGHPFRKDFPVSGYVEMRYDPEEKRVVYQPVTIEPREITPRVIREDRYGGLKH.

The protein belongs to the complex I 30 kDa subunit family. NDH-1 is composed of 14 different subunits. Subunits NuoB, C, D, E, F, and G constitute the peripheral sector of the complex.

Its subcellular location is the cell inner membrane. It catalyses the reaction a quinone + NADH + 5 H(+)(in) = a quinol + NAD(+) + 4 H(+)(out). Functionally, NDH-1 shuttles electrons from NADH, via FMN and iron-sulfur (Fe-S) centers, to quinones in the respiratory chain. The immediate electron acceptor for the enzyme in this species is believed to be ubiquinone. Couples the redox reaction to proton translocation (for every two electrons transferred, four hydrogen ions are translocated across the cytoplasmic membrane), and thus conserves the redox energy in a proton gradient. In Burkholderia ambifaria (strain MC40-6), this protein is NADH-quinone oxidoreductase subunit C.